The chain runs to 825 residues: 5E5 antigen (825 aa).

The interval 126–825 (LSRDGYETET…RPRPSPKSPR (700 aa)) is disordered. Positions 157–180 (PRAPPEPPDPGAPRPPPDPGPLPL) are enriched in pro residues. The span at 191-200 (VQVSTEQLLM) shows a compositional bias: polar residues. Positions 217-237 (TRGDRTQEGGEKPREQREGPR) are enriched in basic and acidic residues. Low complexity predominate over residues 247-256 (QQEESPQQEP). Basic and acidic residues-rich tracts occupy residues 257–277 (SSERGDSVGEREARSPGHEGE), 315–342 (VPKDRGEGGREWGPEAAQEHGEAARDWT), and 392–406 (QEREPGPRDRVESPR). Residues 437 to 449 (RRPRKRRGRKGRM) are compositionally biased toward basic residues. Positions 455–477 (TTATSASATGGPAEEAGASAPEG) are enriched in low complexity. Over residues 485-505 (GRARGPRQQARRRHGPQRRRG) the composition is skewed to basic residues. Residues 524 to 536 (GTTSGEQRADQSQ) show a composition bias toward polar residues. A compositionally biased stretch (low complexity) spans 537–562 (TLPALAGAPTAHAHAVPGPGPAAATL). The span at 565 to 575 (RGRRGSWRGGR) shows a compositional bias: basic residues. Residues 576-588 (RGGGAGASGGGRG) are compositionally biased toward gly residues. Pro residues predominate over residues 721-733 (FPPPPPTRPPPVL). Residues 734–750 (LPLLRLTCAGDPGASRP) show a composition bias toward low complexity.

Expressed in neurons.

The protein resides in the nucleus. Might have DNA-binding ability. This Rattus norvegicus (Rat) protein is 5E5 antigen.